The following is a 206-amino-acid chain: MARYIGPKCKLARREGTDLFLKSGVRAIESKCNIEAAPGIHGQRRGRQSDYGTQLREKQKVRRIYGVLERQFSGYYKQAAGKKGATGENLLQLLECRLDNVVYRMGFGSTRAESRQLVSHKSISVNGQTVNVPSYQVRAGDVVAVREKAKNQLRIVQALDLCAQRGRVEWVEVDTEKKSGVFKNVPARSDLSADINESLIVELYSK.

The S4 RNA-binding domain occupies 96 to 156 (CRLDNVVYRM…EKAKNQLRIV (61 aa)).

This sequence belongs to the universal ribosomal protein uS4 family. As to quaternary structure, part of the 30S ribosomal subunit. Contacts protein S5. The interaction surface between S4 and S5 is involved in control of translational fidelity.

One of the primary rRNA binding proteins, it binds directly to 16S rRNA where it nucleates assembly of the body of the 30S subunit. In terms of biological role, with S5 and S12 plays an important role in translational accuracy. The protein is Small ribosomal subunit protein uS4 of Pseudomonas fluorescens (strain ATCC BAA-477 / NRRL B-23932 / Pf-5).